The following is a 235-amino-acid chain: MVDTTNLIPNTPRYLKVPLIAFNTILWVLGLVLVIIGSIGVSFFSNFKDFTKVSKASAALSNLTTGAPAGVLVIGIFFVILTVIGCFVAGKEKLVGLVIYTMLMLIILVALIGVGGKALTLHNDDVVKQIGNAWEDVSNGPKNSTILKLENFLKCCYWNSTSSRNPLLCPKDSKGIPKYTDTCDSVISSKISSNLYLVGAAAVSIGVIEFICMLFALFLIIRICRAPRTKSYDYQ.

The Cytoplasmic portion of the chain corresponds to 1 to 23 (MVDTTNLIPNTPRYLKVPLIAFN). A helical membrane pass occupies residues 24 to 44 (TILWVLGLVLVIIGSIGVSFF). Over 45 to 68 (SNFKDFTKVSKASAALSNLTTGAP) the chain is Extracellular. The N-linked (GlcNAc...) asparagine glycan is linked to asparagine 62. The helical transmembrane segment at 69 to 89 (AGVLVIGIFFVILTVIGCFVA) threads the bilayer. The Cytoplasmic segment spans residues 90–93 (GKEK). Residues 94–114 (LVGLVIYTMLMLIILVALIGV) form a helical membrane-spanning segment. Topologically, residues 115-200 (GGKALTLHND…ISSNLYLVGA (86 aa)) are extracellular. N-linked (GlcNAc...) asparagine glycans are attached at residues asparagine 143 and asparagine 159. A helical transmembrane segment spans residues 201–221 (AAVSIGVIEFICMLFALFLII). At 222–235 (RICRAPRTKSYDYQ) the chain is on the cytoplasmic side.

This sequence belongs to the tetraspanin (TM4SF) family.

Its subcellular location is the membrane. This is Probable tetraspanin tspB (tspB) from Dictyostelium discoideum (Social amoeba).